The following is a 1002-amino-acid chain: Protein SMAX1-LIKE 7 (1002 aa).

Positions 8-185 (ARQCLTEETA…DVLHPPVTSQ (178 aa)) constitute a Clp R domain. Repeat regions lie at residues 12–86 (LTEE…LDRL) and 103–185 (VSNS…VTSQ). Residues 854 to 858 (LDLNL) carry the EAR motif.

Belongs to the ClpA/ClpB family. As to quaternary structure, interacts with TPL/TPR in an EAR-motif dependent manner. Interacts with TPL, TPR1, TPR2 and TPR4. Interacts with MAX2 and TPR2. Interacts with D14. The interaction with D14 occurs in the presence of (2'R) stereoisomers of strigolactones, but not (2'S) stereoisomers. In terms of processing, ubiquitinated upon strigolactone treatment. Strigolactone, but not karrikin, triggers rapid SCF(MAX2)-dependent degradation. As to expression, expressed in axillary branches and roots. Detected in seedlings and leaves. Expressed in the primary rosette buds and expanding leaves of adult rosettes, the vasculature of the hypocotyls, cotyledons, and mature roots, and in the midvein and petioles of young leaves.

The protein localises to the nucleus. In terms of biological role, probable component of a transcriptional corepressor complex involved in branching control. Regulates cotyledon expansion and lateral root growth, but not germination or hypocotyl elongation. Promotes auxin transport and PIN1 accumulation in the stem and represses BRC1/TCP18 expression in axillary buds. This Arabidopsis thaliana (Mouse-ear cress) protein is Protein SMAX1-LIKE 7.